Here is a 70-residue protein sequence, read N- to C-terminus: Large ribosomal subunit protein bL31 (70 aa).

Zn(2+) contacts are provided by Cys16, Cys18, Cys37, and Cys40.

Belongs to the bacterial ribosomal protein bL31 family. Type A subfamily. Part of the 50S ribosomal subunit. The cofactor is Zn(2+).

Functionally, binds the 23S rRNA. This chain is Large ribosomal subunit protein bL31, found in Enterobacter sp. (strain 638).